Consider the following 287-residue polypeptide: L-cysteine S-thiosulfotransferase subunit SoxA (287 aa).

Residues 1-26 (MKTMTGRLVAAALVCGGAFSGAAVSA) form the signal peptide. Residues 74 to 168 (DDFENSGMVF…AMVALIASVS (95 aa)) enclose the Cytochrome c domain. 7 residues coordinate heme c: C102, C105, H106, C140, C203, C206, and H207. Residue R244 coordinates substrate. Position 248 (C248) interacts with heme c. C248 serves as the catalytic Cysteine persulfide intermediate.

It belongs to the SoxA family. In terms of assembly, heterodimer of SoxA and SoxX. It depends on heme c as a cofactor. In terms of processing, cysteine persulfide at Cys-248.

It localises to the periplasm. The enzyme catalyses L-cysteinyl-[SoxY protein] + thiosulfate + 2 Fe(III)-[cytochrome c] = S-sulfosulfanyl-L-cysteinyl-[SoxY protein] + 2 Fe(II)-[cytochrome c] + 2 H(+). It carries out the reaction S-sulfanyl-L-cysteinyl-[SoxY protein] + thiosulfate + 2 Fe(III)-[cytochrome c] = S-(2-sulfodisulfanyl)-L-cysteinyl-[SoxY protein] + 2 Fe(II)-[cytochrome c] + 2 H(+). Its function is as follows. C-type diheme cytochrome, which is part of the SoxAX cytochrome complex involved in sulfur oxidation. The SoxAX complex catalyzes the formation of a heterodisulfide bond between the conserved cysteine residue on a sulfur carrier SoxYZ complex subunit SoxY and thiosulfate or other inorganic sulfur substrates. This leads to the liberation of two electrons, which may be transferred from the SoxAX complex to another cytochrome c and which then may be used for reductive CO(2) fixation. The sequence is that of L-cysteine S-thiosulfotransferase subunit SoxA from Rhodovulum sulfidophilum (Rhodobacter sulfidophilus).